We begin with the raw amino-acid sequence, 429 residues long: Zygotic gap protein knirps (429 aa).

The segment at residues 2 to 78 is a DNA-binding region (nuclear receptor); the sequence is NQTCKVCGEP…VGMSKGGSRY (77 aa). 2 NR C4-type zinc fingers span residues 5 to 25 and 42 to 66; these read CKVCGEPAAGFHFGAFTCEGC and CKNEGKCIIDKKNRTTCKACRLRKC. Low complexity predominate over residues 112-126; that stretch reads SVGGAPSASSPVGSP. Disordered regions lie at residues 112–148, 223–250, 338–357, and 375–397; these read SVGGAPSASSPVGSPHTPGFGDMAAHLHHHHQQQQQQ, QSVDSVESQNRFSPASQPPVVQPTSSAR, TSRSSVHSFNDSGSEDQEVE, and SSSSSSHSAAHSPNTTTAHAEVK. 2 stretches are compositionally biased toward polar residues: residues 225–237 and 338–349; these read VDSVESQNRFSPA and TSRSSVHSFNDS. Over residues 375–393 the composition is skewed to low complexity; sequence SSSSSSHSAAHSPNTTTAH.

It belongs to the nuclear hormone receptor family. NR0 subfamily.

The protein resides in the nucleus. Functionally, transcriptional repressor. Binds to multiple sites in the eve stripe 3 enhancer element. Plays an essential role in the segmentation process both by refining the expression patterns of gap genes and by establishing pair-rules stripes of gene expression. The chain is Zygotic gap protein knirps (kni) from Drosophila melanogaster (Fruit fly).